A 220-amino-acid chain; its full sequence is Probable glutathione S-transferase parA (220 aa).

Residues 4–83 (NNVVLLDFWP…YIDEVWHDKC (80 aa)) enclose the GST N-terminal domain. Residues Ser-14, Lys-41, Ile-55, and 67–68 (ES) each bind glutathione. In terms of domain architecture, GST C-terminal spans 89–209 (DPYERSQARF…LPHPHKIYGF (121 aa)).

It belongs to the GST superfamily. HSP26 family.

The enzyme catalyses RX + glutathione = an S-substituted glutathione + a halide anion + H(+). This chain is Probable glutathione S-transferase parA (PARA), found in Nicotiana tabacum (Common tobacco).